Here is a 164-residue protein sequence, read N- to C-terminus: Phosphopantetheine adenylyltransferase (164 aa).

Ser-9 contacts substrate. ATP-binding positions include 9–10 and His-17; that span reads SF. Residues Lys-41, Ala-78, and Arg-92 each contribute to the substrate site. Residues 93-95, Glu-103, and 128-134 contribute to the ATP site; these read GLR and SRPITAT.

Belongs to the bacterial CoaD family. In terms of assembly, homohexamer. It depends on Mg(2+) as a cofactor.

It localises to the cytoplasm. It carries out the reaction (R)-4'-phosphopantetheine + ATP + H(+) = 3'-dephospho-CoA + diphosphate. It participates in cofactor biosynthesis; coenzyme A biosynthesis; CoA from (R)-pantothenate: step 4/5. Reversibly transfers an adenylyl group from ATP to 4'-phosphopantetheine, yielding dephospho-CoA (dPCoA) and pyrophosphate. This is Phosphopantetheine adenylyltransferase from Allorhizobium ampelinum (strain ATCC BAA-846 / DSM 112012 / S4) (Agrobacterium vitis (strain S4)).